The sequence spans 153 residues: Small ribosomal subunit protein bS6 (153 aa).

The tract at residues 94–153 (EAHEEGPSAMMQKRDRDDRPRRDGDRPDRGPREDRGPRPPREGGFGDREDRPRRPREDRA) is disordered.

The protein belongs to the bacterial ribosomal protein bS6 family.

Functionally, binds together with bS18 to 16S ribosomal RNA. The protein is Small ribosomal subunit protein bS6 of Agrobacterium fabrum (strain C58 / ATCC 33970) (Agrobacterium tumefaciens (strain C58)).